The following is a 150-amino-acid chain: Sulfur-rich protein, serovar D (150 aa).

The next 2 membrane-spanning stretches (helical) occupy residues Val41–Ala61 and Ala67–Leu87.

It localises to the membrane. This is Sulfur-rich protein, serovar D (srp) from Chlamydia trachomatis serovar D (strain ATCC VR-885 / DSM 19411 / UW-3/Cx).